The chain runs to 250 residues: 1-(5-phosphoribosyl)-5-[(5-phosphoribosylamino)methylideneamino] imidazole-4-carboxamide isomerase (250 aa).

Asp8 (proton acceptor) is an active-site residue. Asp131 (proton donor) is an active-site residue.

Belongs to the HisA/HisF family.

Its subcellular location is the cytoplasm. The catalysed reaction is 1-(5-phospho-beta-D-ribosyl)-5-[(5-phospho-beta-D-ribosylamino)methylideneamino]imidazole-4-carboxamide = 5-[(5-phospho-1-deoxy-D-ribulos-1-ylimino)methylamino]-1-(5-phospho-beta-D-ribosyl)imidazole-4-carboxamide. Its pathway is amino-acid biosynthesis; L-histidine biosynthesis; L-histidine from 5-phospho-alpha-D-ribose 1-diphosphate: step 4/9. The protein is 1-(5-phosphoribosyl)-5-[(5-phosphoribosylamino)methylideneamino] imidazole-4-carboxamide isomerase of Paraburkholderia xenovorans (strain LB400).